We begin with the raw amino-acid sequence, 309 residues long: Fructosamine-3-kinase (309 aa).

Methionine 1 carries the N-acetylmethionine modification. Residue 89-91 (EHL) coordinates ATP. Aspartate 217 acts as the Proton acceptor in catalysis.

Belongs to the fructosamine kinase family. In terms of assembly, monomer. Expressed in red blood cells, brain, heart, kidney and muscle. Lower expression is observed in liver. Not expressed in lung, spleen, testis and thymus.

It carries out the reaction N(6)-(D-fructosyl)-L-lysyl-[protein] + ATP = N(6)-(3-O-phospho-D-fructosyl)-L-lysyl-[protein] + ADP + H(+). It catalyses the reaction N(6)-D-ribulosyl-L-lysyl-[protein] + ATP = N(6)-(3-O-phospho-D-ribulosyl)-L-lysyl-[protein] + ADP + H(+). The enzyme catalyses N(6)-(D-psicosyl)-L-lysyl-[protein] + ATP = N(6)-(3-O-phospho-D-psicosyl)-L-lysyl-[protein] + ADP + H(+). Its function is as follows. Fructosamine-3-kinase involved in protein deglycation by mediating phosphorylation of fructoselysine residues on glycated proteins, to generate fructoselysine-3 phosphate. Fructoselysine-3 phosphate adducts are unstable and decompose under physiological conditions. Involved in intracellular deglycation in erythrocytes and pancreatic islets. Involved in the response to oxidative stress by mediating deglycation of NFE2L2/NRF2, glycation impairing NFE2L2/NRF2 function. Also able to phosphorylate psicosamines and ribulosamines. The chain is Fructosamine-3-kinase from Mus musculus (Mouse).